The following is a 270-amino-acid chain: Aliphatic sulfonates import ATP-binding protein SsuB 3 (270 aa).

The ABC transporter domain maps to 17–238 (LAVRNLKKAF…VRGSHRLAAL (222 aa)). 49–56 (GRSGCGKS) lines the ATP pocket.

Belongs to the ABC transporter superfamily. Aliphatic sulfonates importer (TC 3.A.1.17.2) family. The complex is composed of two ATP-binding proteins (SsuB), two transmembrane proteins (SsuC) and a solute-binding protein (SsuA).

It is found in the cell inner membrane. It carries out the reaction ATP + H2O + aliphatic sulfonate-[sulfonate-binding protein]Side 1 = ADP + phosphate + aliphatic sulfonateSide 2 + [sulfonate-binding protein]Side 1.. Functionally, part of the ABC transporter complex SsuABC involved in aliphatic sulfonates import. Responsible for energy coupling to the transport system. In Pseudomonas savastanoi pv. phaseolicola (strain 1448A / Race 6) (Pseudomonas syringae pv. phaseolicola (strain 1448A / Race 6)), this protein is Aliphatic sulfonates import ATP-binding protein SsuB 3.